The chain runs to 552 residues: MEIFGKTFREGRFVLKEKNFTVEFAVEKIHLGWKISGRVKGSPGRLEVLRTKAPEKVLVNNWQSWGPCRVVDAFSFKPPEIDPNWRYTASVVPDVLERNLQSDYFVAEEGKVYGFLSSKIAHPFFAVEDGELVAYLEYFDVEFDDFVPLEPLVVLEDPNTPLLLEKYAELVGMENNARVPKHTPTGWCSWYHYFLDLTWEETLKNLKLAKNFPFEVFQIDDAYEKDIGDWLVTRGDFPSVEEMAKVIAENGFIPGIWTAPFSVSETSDVFNEHPDWVVKENGEPKMAYRNWNKKIYALDLSKDEVLNWLFDLFSSLRKMGYRYFKIDFLFAGAVPGERKKNITPIQAFRKGIETIRKAVGEDSFILGCGSPLLPAVGCVDGMRIGPDTAPFWGEHIEDNGAPAARWALRNAITRYFMHDRFWLNDPDCLILREEKTDLTQKEKELYSYTCGVLDNMIIESDDLSLVRDHGKKVLKETLELLGGRPRVQNIMSEDLRYEIVSSGTLSGNVKIVVDLNSREYHLEKEGKSSLKKRVVKREDGRNFYFYEEGERE.

Substrate-binding positions include Trp65, Tyr191, 220-221, 325-327, Cys368, and Arg383; these read DD and KID. The active-site Nucleophile is Asp327. Asp387 (proton donor/acceptor) is an active-site residue.

The protein belongs to the glycosyl hydrolase 36 family. In terms of assembly, homodimer.

The enzyme catalyses Hydrolysis of terminal, non-reducing alpha-D-galactose residues in alpha-D-galactosides, including galactose oligosaccharides, galactomannans and galactolipids.. With respect to regulation, inhibited by hydrolysis product alpha-galactopyranose and to a lesser extent by beta-galactopyranose, its mutarotational product. Inhibited by synthetic cyclopropyl carbasugars. Hydrolyzes the short-chain alpha-galactosaccharides raffinose, melibiose and stachyose. This Thermotoga maritima (strain ATCC 43589 / DSM 3109 / JCM 10099 / NBRC 100826 / MSB8) protein is Alpha-galactosidase.